The sequence spans 178 residues: Large ribosomal subunit protein uL6 (178 aa).

Belongs to the universal ribosomal protein uL6 family. In terms of assembly, part of the 50S ribosomal subunit.

Its function is as follows. This protein binds to the 23S rRNA, and is important in its secondary structure. It is located near the subunit interface in the base of the L7/L12 stalk, and near the tRNA binding site of the peptidyltransferase center. The sequence is that of Large ribosomal subunit protein uL6 from Wolinella succinogenes (strain ATCC 29543 / DSM 1740 / CCUG 13145 / JCM 31913 / LMG 7466 / NCTC 11488 / FDC 602W) (Vibrio succinogenes).